A 775-amino-acid chain; its full sequence is 5-methyltetrahydropteroyltriglutamate--homocysteine methyltransferase (775 aa).

5-methyltetrahydropteroyltri-L-glutamate is bound by residues 16 to 19 and lysine 115; that span reads REMK. Residues 435–437 and glutamate 488 each bind L-homocysteine; that span reads IGS. Residues 435–437 and glutamate 488 contribute to the L-methionine site; that span reads IGS. 5-methyltetrahydropteroyltri-L-glutamate is bound by residues 519–520 and tryptophan 565; that span reads RC. Aspartate 603 contacts L-homocysteine. Aspartate 603 contacts L-methionine. Glutamate 609 lines the 5-methyltetrahydropteroyltri-L-glutamate pocket. 3 residues coordinate Zn(2+): histidine 645, cysteine 647, and glutamate 669. Histidine 698 serves as the catalytic Proton donor. Cysteine 730 contributes to the Zn(2+) binding site.

The protein belongs to the vitamin-B12 independent methionine synthase family. Zn(2+) serves as cofactor.

It catalyses the reaction 5-methyltetrahydropteroyltri-L-glutamate + L-homocysteine = tetrahydropteroyltri-L-glutamate + L-methionine. It functions in the pathway amino-acid biosynthesis; L-methionine biosynthesis via de novo pathway; L-methionine from L-homocysteine (MetE route): step 1/1. Functionally, catalyzes the transfer of a methyl group from 5-methyltetrahydrofolate to homocysteine resulting in methionine formation. The protein is 5-methyltetrahydropteroyltriglutamate--homocysteine methyltransferase of Coxiella burnetii (strain CbuK_Q154) (Coxiella burnetii (strain Q154)).